Consider the following 142-residue polypeptide: Large ribosomal subunit protein uL11 (142 aa).

Belongs to the universal ribosomal protein uL11 family. As to quaternary structure, part of the ribosomal stalk of the 50S ribosomal subunit. Interacts with L10 and the large rRNA to form the base of the stalk. L10 forms an elongated spine to which L12 dimers bind in a sequential fashion forming a multimeric L10(L12)X complex. Post-translationally, one or more lysine residues are methylated.

Functionally, forms part of the ribosomal stalk which helps the ribosome interact with GTP-bound translation factors. This chain is Large ribosomal subunit protein uL11, found in Hahella chejuensis (strain KCTC 2396).